The sequence spans 617 residues: Type VII secretion systems protein EssD (617 aa).

The tract at residues 420 to 448 (QNHVTHGPKDSMVRSEGKHSISSHEMNSS) is disordered. Basic and acidic residues predominate over residues 426–438 (GPKDSMVRSEGKH).

The protein belongs to the EssD family. In terms of assembly, interacts (via C-terminal) with EssG; this interaction blocks EssD activity. Interacts with EssE.

It is found in the secreted. Its subcellular location is the cell membrane. Its function is as follows. Component of the type VII secretion system (Ess). Plays a role in Ess secretion during infection. Required for the efficient secretion of EsxA. Required for abscess formation and staphylococcal persistence in host tissue. Possesses a toxic DNase activity that is modulated by EssG by forming a nuclease toxin-antitoxin pair. This nuclease toxin targets competitor bacteria. In Staphylococcus aureus (strain Newman), this protein is Type VII secretion systems protein EssD.